The primary structure comprises 574 residues: Urease subunit alpha (574 aa).

One can recognise a Urease domain in the interval 131-574 (GAIDSHIHFI…LPMAQRYLLL (444 aa)). 3 residues coordinate Ni(2+): His136, His138, and Lys219. Residue Lys219 is modified to N6-carboxylysine. Residue His221 coordinates substrate. Residues His248 and His274 each contribute to the Ni(2+) site. His322 functions as the Proton donor in the catalytic mechanism. Asp362 serves as a coordination point for Ni(2+). The disordered stretch occupies residues 384 to 403 (KVQRGPLPEDAANPRGSRND).

Belongs to the metallo-dependent hydrolases superfamily. Urease alpha subunit family. As to quaternary structure, heterotrimer of UreA (gamma), UreB (beta) and UreC (alpha) subunits. Three heterotrimers associate to form the active enzyme. Ni cation is required as a cofactor. Carboxylation allows a single lysine to coordinate two nickel ions.

It is found in the cytoplasm. The enzyme catalyses urea + 2 H2O + H(+) = hydrogencarbonate + 2 NH4(+). Its pathway is nitrogen metabolism; urea degradation; CO(2) and NH(3) from urea (urease route): step 1/1. The polypeptide is Urease subunit alpha (Prochlorococcus marinus (strain MIT 9313)).